Consider the following 182-residue polypeptide: MENSRFLSCKYRSSFGSSNARRIRAKCEIPAVVYGQGNDVLHLKIKSSEFNKKFAKFTDNTVLILDDGKVERCVFVKDVAENIASKLIYHIDFYEVDKRVELEKYIPIKLVGASIGVKEGGILTVLKEQVKVRSLPLDLPEFIELDLTPVNKGDSVLLKDLVLPSNVKLAESDDNLEVVIIK.

This sequence belongs to the bacterial ribosomal protein bL25 family. CTC subfamily. As to quaternary structure, part of the 50S ribosomal subunit; part of the 5S rRNA/L5/L18/L25 subcomplex. Contacts the 5S rRNA. Binds to the 5S rRNA independently of L5 and L18.

Its function is as follows. This is one of the proteins that binds to the 5S RNA in the ribosome where it forms part of the central protuberance. In Borreliella afzelii (strain PKo) (Borrelia afzelii), this protein is Large ribosomal subunit protein bL25.